A 108-amino-acid polypeptide reads, in one-letter code: Nucleoid-associated protein PSHAa1202 (108 aa).

Disordered stretches follow at residues 1-20 (MFKG…QDRM) and 87-108 (TQER…KMPF).

It belongs to the YbaB/EbfC family. As to quaternary structure, homodimer.

It is found in the cytoplasm. It localises to the nucleoid. Functionally, binds to DNA and alters its conformation. May be involved in regulation of gene expression, nucleoid organization and DNA protection. The protein is Nucleoid-associated protein PSHAa1202 of Pseudoalteromonas translucida (strain TAC 125).